A 45-amino-acid polypeptide reads, in one-letter code: Photosystem II reaction center protein K (45 aa).

A propeptide spanning residues 1 to 8 is cleaved from the precursor; the sequence is MEAVLLLA. A helical membrane pass occupies residues 24 to 44; that stretch reads MPVIPLFFLALAFVWQAAVGF.

Belongs to the PsbK family. PSII is composed of 1 copy each of membrane proteins PsbA, PsbB, PsbC, PsbD, PsbE, PsbF, PsbH, PsbI, PsbJ, PsbK, PsbL, PsbM, PsbT, PsbX, PsbY, PsbZ, Psb30/Ycf12, peripheral proteins PsbO, CyanoQ (PsbQ), PsbU, PsbV and a large number of cofactors. It forms dimeric complexes.

The protein resides in the cellular thylakoid membrane. One of the components of the core complex of photosystem II (PSII). PSII is a light-driven water:plastoquinone oxidoreductase that uses light energy to abstract electrons from H(2)O, generating O(2) and a proton gradient subsequently used for ATP formation. It consists of a core antenna complex that captures photons, and an electron transfer chain that converts photonic excitation into a charge separation. The chain is Photosystem II reaction center protein K from Acaryochloris marina (strain MBIC 11017).